The chain runs to 284 residues: uncharacterized protein (284 aa).

Residues 1–27 (MSNLPTSTPVSPSNLAEENPKSNNPES) are compositionally biased toward polar residues. Disordered stretches follow at residues 1–29 (MSNLPTSTPVSPSNLAEENPKSNNPESSE) and 248–284 (TRDSKRQQKKGKTTTVARSTNKKNKSMMGTVKDLKKK).

This is an uncharacterized protein from Caenorhabditis elegans.